The sequence spans 82 residues: ATP synthase subunit c (82 aa).

2 helical membrane passes run 18-38 (LGEA…IGKI) and 61-81 (IIAA…CGFL).

The protein belongs to the ATPase C chain family. In terms of assembly, F-type ATPases have 2 components, F(1) - the catalytic core - and F(0) - the membrane proton channel. F(1) has five subunits: alpha(3), beta(3), gamma(1), delta(1), epsilon(1). F(0) has three main subunits: a(1), b(2) and c(10-14). The alpha and beta chains form an alternating ring which encloses part of the gamma chain. F(1) is attached to F(0) by a central stalk formed by the gamma and epsilon chains, while a peripheral stalk is formed by the delta and b chains.

The protein localises to the cell inner membrane. In terms of biological role, f(1)F(0) ATP synthase produces ATP from ADP in the presence of a proton or sodium gradient. F-type ATPases consist of two structural domains, F(1) containing the extramembraneous catalytic core and F(0) containing the membrane proton channel, linked together by a central stalk and a peripheral stalk. During catalysis, ATP synthesis in the catalytic domain of F(1) is coupled via a rotary mechanism of the central stalk subunits to proton translocation. Key component of the F(0) channel; it plays a direct role in translocation across the membrane. A homomeric c-ring of between 10-14 subunits forms the central stalk rotor element with the F(1) delta and epsilon subunits. This is ATP synthase subunit c from Azobacteroides pseudotrichonymphae genomovar. CFP2.